The primary structure comprises 132 residues: Small ribosomal subunit protein uS8 (132 aa).

Belongs to the universal ribosomal protein uS8 family. Part of the 30S ribosomal subunit. Contacts proteins S5 and S12.

In terms of biological role, one of the primary rRNA binding proteins, it binds directly to 16S rRNA central domain where it helps coordinate assembly of the platform of the 30S subunit. In Baumannia cicadellinicola subsp. Homalodisca coagulata, this protein is Small ribosomal subunit protein uS8.